Consider the following 1217-residue polypeptide: ATP-dependent helicase/nuclease subunit A (1217 aa).

The UvrD-like helicase ATP-binding domain occupies 10 to 475; the sequence is VIWTDAQWQS…IDLSQNFRSR (466 aa). Position 31-38 (31-38) interacts with ATP; that stretch reads AAAGSGKT. The 311-residue stretch at 476 to 786 folds into the UvrD-like helicase C-terminal domain; it reads KEVLSTTNYI…RMMTIHSSKG (311 aa).

It belongs to the helicase family. AddA subfamily. As to quaternary structure, heterodimer of AddA and AddB/RexB. Mg(2+) serves as cofactor.

It catalyses the reaction Couples ATP hydrolysis with the unwinding of duplex DNA by translocating in the 3'-5' direction.. The catalysed reaction is ATP + H2O = ADP + phosphate + H(+). Its function is as follows. The heterodimer acts as both an ATP-dependent DNA helicase and an ATP-dependent, dual-direction single-stranded exonuclease. Recognizes the chi site generating a DNA molecule suitable for the initiation of homologous recombination. The AddA nuclease domain is required for chi fragment generation; this subunit has the helicase and 3' -&gt; 5' nuclease activities. The chain is ATP-dependent helicase/nuclease subunit A from Staphylococcus aureus (strain MSSA476).